Reading from the N-terminus, the 419-residue chain is Multifunctional CCA protein (419 aa).

ATP-binding residues include Gly8 and Arg11. CTP is bound by residues Gly8 and Arg11. Mg(2+) contacts are provided by Asp21 and Asp23. ATP-binding residues include Arg91, Arg141, and Arg144. CTP contacts are provided by Arg91, Arg141, and Arg144. Residues 230–331 (TGVHVMMVLD…VRLLERCDAL (102 aa)) form the HD domain.

Belongs to the tRNA nucleotidyltransferase/poly(A) polymerase family. Bacterial CCA-adding enzyme type 1 subfamily. Monomer. Can also form homodimers and oligomers. Mg(2+) is required as a cofactor. Ni(2+) serves as cofactor.

It carries out the reaction a tRNA precursor + 2 CTP + ATP = a tRNA with a 3' CCA end + 3 diphosphate. The enzyme catalyses a tRNA with a 3' CCA end + 2 CTP + ATP = a tRNA with a 3' CCACCA end + 3 diphosphate. Functionally, catalyzes the addition and repair of the essential 3'-terminal CCA sequence in tRNAs without using a nucleic acid template. Adds these three nucleotides in the order of C, C, and A to the tRNA nucleotide-73, using CTP and ATP as substrates and producing inorganic pyrophosphate. tRNA 3'-terminal CCA addition is required both for tRNA processing and repair. Also involved in tRNA surveillance by mediating tandem CCA addition to generate a CCACCA at the 3' terminus of unstable tRNAs. While stable tRNAs receive only 3'-terminal CCA, unstable tRNAs are marked with CCACCA and rapidly degraded. The protein is Multifunctional CCA protein of Paracidovorax citrulli (strain AAC00-1) (Acidovorax citrulli).